The chain runs to 77 residues: Cell division topological specificity factor (77 aa).

This sequence belongs to the MinE family.

Functionally, prevents the cell division inhibition by proteins MinC and MinD at internal division sites while permitting inhibition at polar sites. This ensures cell division at the proper site by restricting the formation of a division septum at the midpoint of the long axis of the cell. In Helicobacter pylori (strain HPAG1), this protein is Cell division topological specificity factor.